Reading from the N-terminus, the 252-residue chain is 3-dehydroquinate dehydratase (252 aa).

3-dehydroquinate-binding positions include Ser-21, 46-48, and Arg-82; that span reads EWR. His-143 functions as the Proton donor/acceptor in the catalytic mechanism. Lys-170 acts as the Schiff-base intermediate with substrate in catalysis. Positions 213, 232, and 236 each coordinate 3-dehydroquinate.

This sequence belongs to the type-I 3-dehydroquinase family. As to quaternary structure, homodimer.

It catalyses the reaction 3-dehydroquinate = 3-dehydroshikimate + H2O. Its pathway is metabolic intermediate biosynthesis; chorismate biosynthesis; chorismate from D-erythrose 4-phosphate and phosphoenolpyruvate: step 3/7. In terms of biological role, involved in the third step of the chorismate pathway, which leads to the biosynthesis of aromatic amino acids. Catalyzes the cis-dehydration of 3-dehydroquinate (DHQ) and introduces the first double bond of the aromatic ring to yield 3-dehydroshikimate. The sequence is that of 3-dehydroquinate dehydratase from Escherichia coli O6:K15:H31 (strain 536 / UPEC).